The chain runs to 437 residues: MYHDYASKLLADYRSDPPLWESDLPRHNRYSDNILNSRYCGNKNGAEPVYNESTNSPGKAERGLQLSDLRNFSFMLNPQHKNIGYGDAQDLEPYSSIPKNKLFNNFKNHRPAFSTHTENLIRRNVVRTEKKTFPQVASLKSTQKHCLTQPSSLPSLKNPKNISVPSARFSEHTKFFSYEDLPKLKTKGAIKHEQHLGDQMSGQYYNGYIPHKDVYNILCLAHNLPASVEKVIAGRGIPLGNPHVKPNIEQELIKSACAYTGIPIGPLPSKDLQHGREYQEFSANRHMLQVSNILHSVFANHSIKPQILEDIPTLNAQLTSIKPISPFLNKAYQTHYMENIVTLVPRFKSIANYSSPIPNYSKRDSGQAEYFDTSKQTISRHNNYIPKYTGGIGDSKLDTTFPKDFNASSVPLTSAEKDHSLRGDNSACCISSISPSL.

Belongs to the asfivirus p49 structural protein family.

The protein localises to the virion. Functionally, together with the penton and the other minor capsid proteins (M1249L, p17), forms a complicated network immediately below the outer capsid shell, stabilizing the whole capsid. Plays an essential role in the formation of infectious virus particles. Especially required for the formation of the capsid vertices. During virion assembly, associates with the membrane and probably mediates the docking of the penton complex to the inner membrane, where it recruits the capsomers to form the penton core. The chain is Minor capsid protein p49 from Ornithodoros (relapsing fever ticks).